Here is a 418-residue protein sequence, read N- to C-terminus: Serine hydroxymethyltransferase (418 aa).

(6S)-5,6,7,8-tetrahydrofolate is bound by residues Leu-121 and 125–127 (GHL). Lys-230 carries the N6-(pyridoxal phosphate)lysine modification. 355-357 (SPF) lines the (6S)-5,6,7,8-tetrahydrofolate pocket.

This sequence belongs to the SHMT family. Homodimer. The cofactor is pyridoxal 5'-phosphate.

The protein localises to the cytoplasm. The catalysed reaction is (6R)-5,10-methylene-5,6,7,8-tetrahydrofolate + glycine + H2O = (6S)-5,6,7,8-tetrahydrofolate + L-serine. The protein operates within one-carbon metabolism; tetrahydrofolate interconversion. It functions in the pathway amino-acid biosynthesis; glycine biosynthesis; glycine from L-serine: step 1/1. Functionally, catalyzes the reversible interconversion of serine and glycine with tetrahydrofolate (THF) serving as the one-carbon carrier. This reaction serves as the major source of one-carbon groups required for the biosynthesis of purines, thymidylate, methionine, and other important biomolecules. Also exhibits THF-independent aldolase activity toward beta-hydroxyamino acids, producing glycine and aldehydes, via a retro-aldol mechanism. The sequence is that of Serine hydroxymethyltransferase from Streptococcus pyogenes serotype M5 (strain Manfredo).